Consider the following 528-residue polypeptide: D-3-phosphoglycerate dehydrogenase (528 aa).

NAD(+)-binding positions include 151–152 (RI), aspartate 171, 230–232 (AAR), and aspartate 256. Arginine 232 is an active-site residue. Glutamate 261 is an active-site residue. Histidine 279 (proton donor) is an active-site residue. 279 to 282 (HLGA) is an NAD(+) binding site. The ACT domain maps to 455-528 (NLVIRYVDQP…ANKLEVVNLS (74 aa)).

The protein belongs to the D-isomer specific 2-hydroxyacid dehydrogenase family.

The catalysed reaction is (2R)-3-phosphoglycerate + NAD(+) = 3-phosphooxypyruvate + NADH + H(+). The enzyme catalyses (R)-2-hydroxyglutarate + NAD(+) = 2-oxoglutarate + NADH + H(+). Its pathway is amino-acid biosynthesis; L-serine biosynthesis; L-serine from 3-phospho-D-glycerate: step 1/3. In terms of biological role, catalyzes the reversible oxidation of 3-phospho-D-glycerate to 3-phosphonooxypyruvate, the first step of the phosphorylated L-serine biosynthesis pathway. Also catalyzes the reversible oxidation of 2-hydroxyglutarate to 2-oxoglutarate. This chain is D-3-phosphoglycerate dehydrogenase (serA), found in Mycobacterium leprae (strain TN).